The sequence spans 319 residues: tRNA uridine(34) hydroxylase (319 aa).

In terms of domain architecture, Rhodanese spans 124 to 218 (LDEDTVILDA…YGKNEETKGE (95 aa)). Residue C178 is the Cysteine persulfide intermediate of the active site.

The protein belongs to the TrhO family.

It catalyses the reaction uridine(34) in tRNA + AH2 + O2 = 5-hydroxyuridine(34) in tRNA + A + H2O. In terms of biological role, catalyzes oxygen-dependent 5-hydroxyuridine (ho5U) modification at position 34 in tRNAs. In Listeria monocytogenes serotype 4b (strain CLIP80459), this protein is tRNA uridine(34) hydroxylase.